Consider the following 368-residue polypeptide: Cytoskeleton protein RodZ (368 aa).

The Cytoplasmic portion of the chain corresponds to Met1–Gly111. One can recognise an HTH cro/C1-type domain in the interval Leu19 to Leu79. Residues Gln30–Glu49 constitute a DNA-binding region (H-T-H motif). The helical; Signal-anchor for type II membrane protein transmembrane segment at Trp112–Trp132 threads the bilayer. Topologically, residues Trp133–Glu368 are periplasmic. The tract at residues Ser151–Thr243 is disordered. A compositionally biased stretch (low complexity) spans Ser193–Thr221. Over residues Val229–Thr243 the composition is skewed to polar residues.

It belongs to the RodZ family.

Its subcellular location is the cell inner membrane. Its function is as follows. Cytoskeletal protein that is involved in cell-shape control through regulation of the length of the long axis. This Yersinia pseudotuberculosis serotype O:3 (strain YPIII) protein is Cytoskeleton protein RodZ.